The primary structure comprises 112 residues: Citrate synthase (112 aa).

Residues His-39 and Asp-97 contribute to the active site.

It belongs to the citrate synthase family.

The enzyme catalyses oxaloacetate + acetyl-CoA + H2O = citrate + CoA + H(+). Its pathway is carbohydrate metabolism; tricarboxylic acid cycle; isocitrate from oxaloacetate: step 1/2. In Bartonella vinsonii subsp. berkhoffii, this protein is Citrate synthase (gltA).